Here is a 324-residue protein sequence, read N- to C-terminus: Olfactory receptor 5T17 (324 aa).

The Extracellular portion of the chain corresponds to methionine 1–isoleucine 37. N-linked (GlcNAc...) asparagine glycosylation is present at asparagine 17. A helical membrane pass occupies residues phenylalanine 38 to valine 58. The Cytoplasmic segment spans residues valine 59–arginine 66. The helical transmembrane segment at leucine 67–serine 87 threads the bilayer. Residues valine 88–threonine 111 lie on the Extracellular side of the membrane. N-linked (GlcNAc...) asparagine glycosylation occurs at asparagine 101. Cysteines 109 and 201 form a disulfide. Residues glutamine 112 to tyrosine 132 form a helical membrane-spanning segment. The Cytoplasmic segment spans residues aspartate 133–alanine 145. A helical transmembrane segment spans residues valine 146–leucine 166. Topologically, residues histidine 167–glutamine 208 are extracellular. The helical transmembrane segment at leucine 209–serine 229 threads the bilayer. The Cytoplasmic portion of the chain corresponds to tyrosine 230–isoleucine 249. A helical transmembrane segment spans residues phenylalanine 250–methionine 270. Topologically, residues tyrosine 271 to aspartate 283 are extracellular. Asparagine 277 carries N-linked (GlcNAc...) asparagine glycosylation. A helical membrane pass occupies residues methionine 284–leucine 304. Residues arginine 305–glutamate 324 are Cytoplasmic-facing.

Belongs to the G-protein coupled receptor 1 family.

The protein localises to the cell membrane. Functionally, potential odorant receptor. This chain is Olfactory receptor 5T17, found in Mus musculus (Mouse).